Reading from the N-terminus, the 349-residue chain is Protein RecA (349 aa).

Glycine 66 to threonine 73 contributes to the ATP binding site.

This sequence belongs to the RecA family.

Its subcellular location is the cytoplasm. Its function is as follows. Can catalyze the hydrolysis of ATP in the presence of single-stranded DNA, the ATP-dependent uptake of single-stranded DNA by duplex DNA, and the ATP-dependent hybridization of homologous single-stranded DNAs. It interacts with LexA causing its activation and leading to its autocatalytic cleavage. This is Protein RecA from Psychrobacter sp. (strain PRwf-1).